Consider the following 557-residue polypeptide: CTP synthase (557 aa).

The tract at residues 1-272 (MARSKIVKHI…DSLVLKKLML (272 aa)) is amidoligase domain. Residue S18 coordinates CTP. S18 serves as a coordination point for UTP. 19 to 24 (SLGKGI) contributes to the ATP binding site. Residue Y59 participates in L-glutamine binding. D76 is a binding site for ATP. The Mg(2+) site is built by D76 and E146. Residues 153 to 155 (DIE), 193 to 198 (KTKPTQ), and K229 each bind CTP. UTP is bound by residues 193-198 (KTKPTQ) and K229. The 245-residue stretch at 299-543 (EIGVCGKYTK…VAEAKKFRDE (245 aa)) folds into the Glutamine amidotransferase type-1 domain. G363 contacts L-glutamine. The active-site Nucleophile; for glutamine hydrolysis is C390. L-glutamine contacts are provided by residues 391-394 (LGMQ), E414, and R471. Residues H516 and E518 contribute to the active site.

It belongs to the CTP synthase family. In terms of assembly, homotetramer.

The enzyme catalyses UTP + L-glutamine + ATP + H2O = CTP + L-glutamate + ADP + phosphate + 2 H(+). The catalysed reaction is L-glutamine + H2O = L-glutamate + NH4(+). It catalyses the reaction UTP + NH4(+) + ATP = CTP + ADP + phosphate + 2 H(+). The protein operates within pyrimidine metabolism; CTP biosynthesis via de novo pathway; CTP from UDP: step 2/2. Its activity is regulated as follows. Allosterically activated by GTP, when glutamine is the substrate; GTP has no effect on the reaction when ammonia is the substrate. The allosteric effector GTP functions by stabilizing the protein conformation that binds the tetrahedral intermediate(s) formed during glutamine hydrolysis. Inhibited by the product CTP, via allosteric rather than competitive inhibition. Catalyzes the ATP-dependent amination of UTP to CTP with either L-glutamine or ammonia as the source of nitrogen. Regulates intracellular CTP levels through interactions with the four ribonucleotide triphosphates. The protein is CTP synthase of Chloroherpeton thalassium (strain ATCC 35110 / GB-78).